We begin with the raw amino-acid sequence, 165 residues long: Transcriptional repressor NrdR (165 aa).

The segment at 3–34 is a zinc-finger region; it reads CPFCGAQDTRVVDSRLSHEGDQVRRRRECGEC. Residues 49–139 enclose the ATP-cone domain; it reads PRVVKSDGSR…VYRRFEDVNQ (91 aa).

The protein belongs to the NrdR family. It depends on Zn(2+) as a cofactor.

Negatively regulates transcription of bacterial ribonucleotide reductase nrd genes and operons by binding to NrdR-boxes. In Methylococcus capsulatus (strain ATCC 33009 / NCIMB 11132 / Bath), this protein is Transcriptional repressor NrdR.